Consider the following 199-residue polypeptide: Protein-methionine-sulfoxide reductase heme-binding subunit MsrQ (199 aa).

4 consecutive transmembrane segments (helical) span residues 10–30 (WLKVCLHLAGFLPLLWLFWAI), 82–102 (LWCFVWATLHLTSYALLELGI), 116–136 (PYLTLGIISWLVLLALTLTST), and 153–173 (VVYLVAILAPIHYLWSVKILS).

It belongs to the MsrQ family. In terms of assembly, heterodimer of a catalytic subunit (MsrP) and a heme-binding subunit (MsrQ). FMN serves as cofactor. Heme b is required as a cofactor.

The protein resides in the cell inner membrane. Functionally, part of the MsrPQ system that repairs oxidized periplasmic proteins containing methionine sulfoxide residues (Met-O), using respiratory chain electrons. Thus protects these proteins from oxidative-stress damage caused by reactive species of oxygen and chlorine generated by the host defense mechanisms. MsrPQ is essential for the maintenance of envelope integrity under bleach stress, rescuing a wide series of structurally unrelated periplasmic proteins from methionine oxidation, including the primary periplasmic chaperone SurA and the lipoprotein Pal. MsrQ provides electrons for reduction to the reductase catalytic subunit MsrP, using the quinone pool of the respiratory chain. The chain is Protein-methionine-sulfoxide reductase heme-binding subunit MsrQ from Salmonella newport (strain SL254).